A 724-amino-acid polypeptide reads, in one-letter code: Hyperosmolality-gated Ca2+ permeable channel 3.1 (724 aa).

At 1–4 (MEFG) the chain is on the extracellular side. The helical transmembrane segment at 5-25 (SFLVSLGTSFVIFVILMLLFT) threads the bilayer. Over 26–85 (WLSRKSGNAPIYYPNRILKGLEPWEGTSLTRNPFAWMREALTSSEQDVVNLSGVDTAVHF) the chain is Cytoplasmic. Residues 86–108 (VFLSTVLGIFACSSLLLLPTLLP) traverse the membrane as a helical segment. The Extracellular segment spans residues 109-147 (LAATDNNIKNTKNATDTTSKGTFSQLDNLSMANITKKSS). The helical transmembrane segment at 148–170 (RLWAFLGAVYWISLVTYFFLWKA) threads the bilayer. Over 171 to 358 (YKHVSSLRAQ…WQNLNIKLFS (188 aa)) the chain is Cytoplasmic. A coiled-coil region spans residues 241–309 (EKLEGYKKKL…KAVLAEKQQT (69 aa)). The helical transmembrane segment at 359–385 (RIIRQYFIYFFVAVTILFYMIPIAFVS) threads the bilayer. Over 386–411 (AITTLKNLQRIIPFIKPVVEITAIRT) the chain is Extracellular. The chain crosses the membrane as a helical span at residues 412 to 439 (VLESFLPQIALIVFLAMLPKLLLFLSKA). The Cytoplasmic segment spans residues 440-448 (EGIPSQSHA). A helical membrane pass occupies residues 449–472 (IRAASGKYFYFSVFNVFIGVTLAG). At 473–497 (TLFNTVKDIAKNPKLDMIINLLATS) the chain is on the extracellular side. A helical transmembrane segment spans residues 498-529 (LPKSATFFLTYVALKFFIGYGLELSRIIPLII). The Cytoplasmic portion of the chain corresponds to 530–554 (FHLKKKYLCKTEAEVKEAWYPGDLS). Residues 555–574 (YATRVPGDMLILTITFCYSV) form a helical membrane-spanning segment. Residue isoleucine 575 is a topological domain, extracellular. The chain crosses the membrane as a helical span at residues 576 to 594 (APLILIFGITYFGLGWLVL). Residues 595–612 (RNQALKVYVPSYESYGRM) lie on the Cytoplasmic side of the membrane. A helical transmembrane segment spans residues 613–636 (WPHIHQRILAALFLFQVVMFGYLG). The Extracellular portion of the chain corresponds to 637-641 (AKTFF). The chain crosses the membrane as a helical span at residues 642–662 (YTALVIPLIITSLIFGYVCRQ). At 663 to 724 (KFYGGFEHTA…YQDFNAIAGV (62 aa)) the chain is on the cytoplasmic side.

Belongs to the CSC1 (TC 1.A.17) family. In terms of assembly, homodimer.

It is found in the membrane. In terms of biological role, acts as a hyperosmolarity-gated non-selective cation channel that permeates Ca(2+) ions. Mechanosensitive ion channel that converts mechanical stimuli into a flow of ions: activated in response to membrane stretch. Not activated in response to membrane poke. The chain is Hyperosmolality-gated Ca2+ permeable channel 3.1 from Arabidopsis thaliana (Mouse-ear cress).